A 252-amino-acid polypeptide reads, in one-letter code: Ribosome maturation factor RimP (252 aa).

A disordered region spans residues glutamine 188 to glutamate 252. Residues alanine 208–proline 224 are compositionally biased toward basic residues.

This sequence belongs to the RimP family.

It localises to the cytoplasm. Required for maturation of 30S ribosomal subunits. The chain is Ribosome maturation factor RimP from Rhodospirillum centenum (strain ATCC 51521 / SW).